A 642-amino-acid chain; its full sequence is Poly(A) polymerase beta (642 aa).

Residues 101–103 (FGS), Thr110, 114–116 (DID), Asp168, Lys229, Tyr238, and 247–248 (GV) each bind ATP. Mg(2+)-binding residues include Asp114, Asp116, and Asp168. Disordered regions lie at residues 530-553 (SENS…GNPQ) and 620-642 (LVNH…ILGV). A compositionally biased stretch (polar residues) spans 620–636 (LVNHPSRPSGNTATNIP).

The protein belongs to the poly(A) polymerase family. Interacts with GSG1. Requires Mg(2+) as cofactor. Mn(2+) is required as a cofactor. In terms of tissue distribution, testis specific.

The protein resides in the cytoplasm. The protein localises to the nucleus. The enzyme catalyses RNA(n) + ATP = RNA(n)-3'-adenine ribonucleotide + diphosphate. This Mus musculus (Mouse) protein is Poly(A) polymerase beta.